Here is a 275-residue protein sequence, read N- to C-terminus: Phosphatidylglycerol--prolipoprotein diacylglyceryl transferase (275 aa).

7 helical membrane passes run 22-42 (LSVRWYGLMYLFGFAFAMWLA), 61-81 (LLFYGFLGVILGGRVGYVLFY), 96-116 (IWTGGMSFHGGLIGVITAMIW), 125-145 (FFTVADFVAPLIPFGLGVGRI), 177-197 (SQLYQFALEGVVLFIILNLFW), 204-224 (GAISGLFLFCYGLFRFLVEFV), and 238-258 (ISMGQILSMPMIVAGALMVWA). Arg144 provides a ligand contact to a 1,2-diacyl-sn-glycero-3-phospho-(1'-sn-glycerol).

The protein belongs to the Lgt family.

It is found in the cell inner membrane. The enzyme catalyses L-cysteinyl-[prolipoprotein] + a 1,2-diacyl-sn-glycero-3-phospho-(1'-sn-glycerol) = an S-1,2-diacyl-sn-glyceryl-L-cysteinyl-[prolipoprotein] + sn-glycerol 1-phosphate + H(+). The protein operates within protein modification; lipoprotein biosynthesis (diacylglyceryl transfer). Functionally, catalyzes the transfer of the diacylglyceryl group from phosphatidylglycerol to the sulfhydryl group of the N-terminal cysteine of a prolipoprotein, the first step in the formation of mature lipoproteins. This Aeromonas salmonicida (strain A449) protein is Phosphatidylglycerol--prolipoprotein diacylglyceryl transferase.